The primary structure comprises 404 residues: Chorismate synthase (404 aa).

The NADP(+) site is built by arginine 40 and arginine 46. FMN contacts are provided by residues 135-137 (RAS), 256-257 (QA), glycine 300, 315-319 (KPIST), and arginine 341.

This sequence belongs to the chorismate synthase family. As to quaternary structure, homotetramer. FMNH2 is required as a cofactor.

It catalyses the reaction 5-O-(1-carboxyvinyl)-3-phosphoshikimate = chorismate + phosphate. Its pathway is metabolic intermediate biosynthesis; chorismate biosynthesis; chorismate from D-erythrose 4-phosphate and phosphoenolpyruvate: step 7/7. Its function is as follows. Catalyzes the anti-1,4-elimination of the C-3 phosphate and the C-6 proR hydrogen from 5-enolpyruvylshikimate-3-phosphate (EPSP) to yield chorismate, which is the branch point compound that serves as the starting substrate for the three terminal pathways of aromatic amino acid biosynthesis. This reaction introduces a second double bond into the aromatic ring system. The chain is Chorismate synthase from Mycobacterium sp. (strain JLS).